The chain runs to 460 residues: Glutamate--tRNA ligase 2 (460 aa).

The 'HIGH' region signature appears at 8–18 (PSPTGFLHVGG). The 'KMSKS' region motif lies at 237–241 (KLSKR). Residue Lys-240 participates in ATP binding.

This sequence belongs to the class-I aminoacyl-tRNA synthetase family. Glutamate--tRNA ligase type 1 subfamily. As to quaternary structure, monomer.

The protein resides in the cytoplasm. It carries out the reaction tRNA(Glu) + L-glutamate + ATP = L-glutamyl-tRNA(Glu) + AMP + diphosphate. Its function is as follows. Catalyzes the attachment of glutamate to tRNA(Glu) in a two-step reaction: glutamate is first activated by ATP to form Glu-AMP and then transferred to the acceptor end of tRNA(Glu). The protein is Glutamate--tRNA ligase 2 of Campylobacter fetus subsp. fetus (strain 82-40).